We begin with the raw amino-acid sequence, 1118 residues long: Protein translocase subunit SecA (1118 aa).

Residues Gln-176, 194–198 (GEGKT), and Asp-693 each bind ATP. Residues 1034–1056 (QQPVQQPKYRETKDEAGSAFGGG) are disordered.

This sequence belongs to the SecA family. Monomer and homodimer. Part of the essential Sec protein translocation apparatus which comprises SecA, SecYEG and auxiliary proteins SecDF. Other proteins may also be involved.

Its subcellular location is the cell inner membrane. The protein resides in the cytoplasm. It catalyses the reaction ATP + H2O + cellular proteinSide 1 = ADP + phosphate + cellular proteinSide 2.. Functionally, part of the Sec protein translocase complex. Interacts with the SecYEG preprotein conducting channel. Has a central role in coupling the hydrolysis of ATP to the transfer of proteins into and across the cell membrane, serving as an ATP-driven molecular motor driving the stepwise translocation of polypeptide chains across the membrane. The chain is Protein translocase subunit SecA from Cytophaga hutchinsonii (strain ATCC 33406 / DSM 1761 / CIP 103989 / NBRC 15051 / NCIMB 9469 / D465).